A 1142-amino-acid chain; its full sequence is Collagen alpha-1(XIX) chain (1142 aa).

An N-terminal signal peptide occupies residues 1–23; it reads MRLTGPWKLWLWMSIFLLPASTS. The Laminin G-like domain maps to 50–234; sequence NKLEVSGFDL…LHQLKIYCSA (185 aa). 3 disordered regions span residues 288–680, 704–1009, and 1053–1142; these read IPNK…GDPI, PGLK…PGIP, and YGRP…TGGN. Collagen-like domains follow at residues 292–349, 350–391, and 392–433; these read GEAG…GEKG, DPAL…ALPG, and SLGI…GIQG. The segment at 292 to 351 is triple-helical region 1 (COL1); the sequence is GEAGLPGAPGSPGQKGHKGEPGENGLHGAPGFPGQKGEQGFEGSKGETGEKGEQGEKGDP. Positions 335–350 are enriched in basic and acidic residues; sequence SKGETGEKGEQGEKGD. The interval 370 to 429 is triple-helical region 2 (COL2); the sequence is GPPGPKGEKGDTGPPGPPALPGSLGIQGPQGPPGKEGQRGRRGKTGPPGKPGPPGPPGPP. Over residues 390–404 the composition is skewed to low complexity; that stretch reads PGSLGIQGPQGPPGK. A compositionally biased stretch (pro residues) spans 417–429; the sequence is PGKPGPPGPPGPP. Basic and acidic residues-rich tracts occupy residues 444-463 and 478-496; these read KDNK…DKGE and QKGE…DRGE. A triple-helical region 3 (COL3) region spans residues 448–688; that stretch reads GNDEHEAGGL…PIALPLLGDI (241 aa). 8 Collagen-like domains span residues 474–516, 568–624, 626–678, 728–778, 779–814, 845–903, 904–947, and 948–1004; these read GPKG…GPPG, GPPG…GPQG, GIPG…PPGD, KGDI…APGP, TGPP…PPGP, GPPG…VPGE, PGER…GDRG, and PKGE…GSPG. Over residues 640 to 651 the composition is skewed to low complexity; it reads PGIQGPRGLPGL. Residues 700–818 are triple-helical region 4 (COL4); that stretch reads QASVPGLKSN…PGPPGPPGIP (119 aa). Basic and acidic residues-rich tracts occupy residues 720–731 and 743–752; these read GKYDSMARKGDI and EGPKGSKGER. Composition is skewed to pro residues over residues 806 to 817 and 840 to 852; these read PGKPGPPGPPGI and YPGP…PKGD. The triple-helical region 5 (COL5) stretch occupies residues 833 to 1012; that stretch reads GGVNVPSYPG…PGIPGIPADA (180 aa). The segment covering 943–954 has biased composition (basic and acidic residues); sequence PGDRGPKGERGD. A Cell attachment site motif is present at residues 952–954; sequence RGD. The segment at 1054 to 1111 is triple-helical region 6 (COL6); it reads GRPGPPGKDGLPGPPGDPGPQGYRGQKGERGEPGIGLPGSPGLPGTSALGLPGSPGAP. The span at 1093–1107 shows a compositional bias: low complexity; the sequence is SPGLPGTSALGLPGS. The span at 1108 to 1119 shows a compositional bias: pro residues; that stretch reads PGAPGPQGPPGP.

It belongs to the fibril-associated collagens with interrupted helices (FACIT) family. As to quaternary structure, oligomer; disulfide-linked. In terms of processing, prolines at the third position of the tripeptide repeating unit (G-X-Y) are hydroxylated in some or all of the chains. In terms of tissue distribution, localized to vascular, neuronal, mesenchymal, and some epithelial basement membrane zones in umbilical cord.

Its subcellular location is the secreted. The protein resides in the extracellular space. It localises to the extracellular matrix. Functionally, may act as a cross-bridge between fibrils and other extracellular matrix molecules. Involved in skeletal myogenesis in the developing esophagus. May play a role in organization of the pericellular matrix or the sphinteric smooth muscle. The polypeptide is Collagen alpha-1(XIX) chain (COL19A1) (Homo sapiens (Human)).